The chain runs to 144 residues: Large ribosomal subunit protein eL27 (144 aa).

Belongs to the eukaryotic ribosomal protein eL27 family.

It is found in the cytoplasm. The sequence is that of Large ribosomal subunit protein eL27 (RPL27) from Tetrahymena thermophila.